The primary structure comprises 694 residues: Soluble starch synthase 2-2, chloroplastic/amyloplastic (694 aa).

The N-terminal 15 residues, 1–15 (MSGAIASSPAATLFL), are a transit peptide targeting the chloroplast. Residues 93–197 (KADHVEDSVS…DSENKESGPL (105 aa)) are disordered. Over residues 127 to 142 (APVSKPKVDPSVPASK) the composition is skewed to low complexity. Over residues 156–176 (AALDKKEDVGVAEPLEAKADA) the composition is skewed to basic and acidic residues. The segment covering 177-186 (GGDAGAVSSA) has biased composition (low complexity). Lys217 is a binding site for ADP-alpha-D-glucose.

It belongs to the glycosyltransferase 1 family. Bacterial/plant glycogen synthase subfamily. In terms of tissue distribution, expressed in leaves and weakly in endosperm and roots.

Its subcellular location is the plastid. It localises to the amyloplast. The protein localises to the chloroplast. It carries out the reaction [(1-&gt;4)-alpha-D-glucosyl](n) + ADP-alpha-D-glucose = [(1-&gt;4)-alpha-D-glucosyl](n+1) + ADP + H(+). Its pathway is glycan biosynthesis; starch biosynthesis. Its function is as follows. May contribute to the deposition of transient starch in chloroplasts of leaves. The polypeptide is Soluble starch synthase 2-2, chloroplastic/amyloplastic (SSII-2) (Oryza sativa subsp. japonica (Rice)).